Here is a 504-residue protein sequence, read N- to C-terminus: MNGSNETVERRIELRRPLVDTEKKLPLEVGLESVLTESSLPYRRRVYLGMCIELKLLLRLALPAILVYLINGGMGISARIFAGHLGSTQLAAASIGNSSFSLVYALMLGMGSAVETLCGQAYGAHRYEMLGIYLQRATIVLALVGFPMTILYTFSYPILLLLGEPKTVSYMGSLYIAGLIPQIFAYAVYFTAQKFLQAQSVVAPSAYISAAALVLQISLTWITVYAMGQGLMGIAYVLTISWWFIVGAQTFYVITSVRFKDTWTGFSWKSLHGLWSFFKLSAGSAVMICLELWYTQILVLLAGLLKDPALSLDSLSICMSISALSFMVSVGFNAAVSVRTSNELGAGNPKSALFSTWTATFVSFVISVVEALVVIASRDNVSYIFTSDADVAKAVSDLCPFLAVTIILNGIQPVLSGVAVGCGWQTYVAYVNIGCYYIVGIPIGCILGFTFNFQAKGIWTGMIGGTLMQTLILLYVTYQADWDKEVEKARKRLDMWDDKEPLQN.

12 helical membrane-spanning segments follow: residues 56-76 (LLLR…GMGI), 90-110 (LAAA…MLGM), 139-159 (IVLA…YPIL), 170-190 (YMGS…AVYF), 208-228 (ISAA…YAMG), 234-254 (IAYV…FYVI), 273-295 (GLWS…LWYT), 316-336 (SICM…NAAV), 356-376 (TWTA…VVIA), 401-421 (FLAV…VAVG), 433-453 (IGCY…TFNF), and 457-477 (GIWT…LYVT).

The protein belongs to the multi antimicrobial extrusion (MATE) (TC 2.A.66.1) family.

Its subcellular location is the membrane. The polypeptide is Protein DETOXIFICATION 38 (Arabidopsis thaliana (Mouse-ear cress)).